We begin with the raw amino-acid sequence, 316 residues long: Beta-ketoacyl-[acyl-carrier-protein] synthase III (316 aa).

Catalysis depends on residues cysteine 112 and histidine 243. Positions 244–248 (QANIR) are ACP-binding. Asparagine 273 is a catalytic residue.

Belongs to the thiolase-like superfamily. FabH family. Homodimer.

The protein localises to the cytoplasm. It carries out the reaction malonyl-[ACP] + acetyl-CoA + H(+) = 3-oxobutanoyl-[ACP] + CO2 + CoA. It participates in lipid metabolism; fatty acid biosynthesis. Catalyzes the condensation reaction of fatty acid synthesis by the addition to an acyl acceptor of two carbons from malonyl-ACP. Catalyzes the first condensation reaction which initiates fatty acid synthesis and may therefore play a role in governing the total rate of fatty acid production. Possesses both acetoacetyl-ACP synthase and acetyl transacylase activities. Its substrate specificity determines the biosynthesis of branched-chain and/or straight-chain of fatty acids. The sequence is that of Beta-ketoacyl-[acyl-carrier-protein] synthase III from Actinobacillus pleuropneumoniae serotype 5b (strain L20).